Reading from the N-terminus, the 254-residue chain is Proline-rich protein 23A3 (254 aa).

3 disordered regions span residues 1 to 50, 161 to 196, and 212 to 254; these read MLRT…LEAP, ASPP…GAEQ, and PFPG…LVYE. A compositionally biased stretch (low complexity) spans 35 to 50; it reads EPACPEPLAQPELEAP. Residues 214–241 show a composition bias toward pro residues; sequence PGSPLQPLPPSPSRNPQEQLPPCPPCSP. Over residues 243–254 the composition is skewed to basic residues; the sequence is APRRARKRLVYE.

Belongs to the PRR23 family.

This is Proline-rich protein 23A3 from Mus musculus (Mouse).